The sequence spans 232 residues: MAKISKRRQAFAAKVDRQKLYPIDDALALVKECASAKFDESIDVAVQLGIDAKKSDQVVRGSVVLPAGTGKSVRVAVFAQGEKAEQARAAGAEVVGMEDLAEQIKAGQMDFDIVIASPDTMRIVGTLGQILGPRGLMPNPKVGTVTPDVATAVKNAKAGQVQFRVDKAGIIHATIGRASFEPTALRTNLSALIEALQKAKPATSKGVYLRKIALSSTMGVGVRVDQGSLAAQ.

It belongs to the universal ribosomal protein uL1 family. Part of the 50S ribosomal subunit.

Its function is as follows. Binds directly to 23S rRNA. The L1 stalk is quite mobile in the ribosome, and is involved in E site tRNA release. Functionally, protein L1 is also a translational repressor protein, it controls the translation of the L11 operon by binding to its mRNA. The protein is Large ribosomal subunit protein uL1 of Burkholderia mallei (strain NCTC 10247).